The sequence spans 154 residues: Crossover junction endodeoxyribonuclease RuvC (154 aa).

Active-site residues include aspartate 7, glutamate 67, and aspartate 139. Mg(2+) contacts are provided by aspartate 7, glutamate 67, and aspartate 139.

This sequence belongs to the RuvC family. In terms of assembly, homodimer which binds Holliday junction (HJ) DNA. The HJ becomes 2-fold symmetrical on binding to RuvC with unstacked arms; it has a different conformation from HJ DNA in complex with RuvA. In the full resolvosome a probable DNA-RuvA(4)-RuvB(12)-RuvC(2) complex forms which resolves the HJ. Mg(2+) serves as cofactor.

Its subcellular location is the cytoplasm. The enzyme catalyses Endonucleolytic cleavage at a junction such as a reciprocal single-stranded crossover between two homologous DNA duplexes (Holliday junction).. Its function is as follows. The RuvA-RuvB-RuvC complex processes Holliday junction (HJ) DNA during genetic recombination and DNA repair. Endonuclease that resolves HJ intermediates. Cleaves cruciform DNA by making single-stranded nicks across the HJ at symmetrical positions within the homologous arms, yielding a 5'-phosphate and a 3'-hydroxyl group; requires a central core of homology in the junction. The consensus cleavage sequence is 5'-(A/T)TT(C/G)-3'. Cleavage occurs on the 3'-side of the TT dinucleotide at the point of strand exchange. HJ branch migration catalyzed by RuvA-RuvB allows RuvC to scan DNA until it finds its consensus sequence, where it cleaves and resolves the cruciform DNA. This chain is Crossover junction endodeoxyribonuclease RuvC, found in Synechococcus sp. (strain CC9605).